The following is a 177-amino-acid chain: ATP-dependent protease subunit HslV (177 aa).

Residue threonine 6 is part of the active site. 3 residues coordinate Na(+): serine 162, cysteine 165, and threonine 168.

It belongs to the peptidase T1B family. HslV subfamily. In terms of assembly, a double ring-shaped homohexamer of HslV is capped on each side by a ring-shaped HslU homohexamer. The assembly of the HslU/HslV complex is dependent on binding of ATP.

Its subcellular location is the cytoplasm. The enzyme catalyses ATP-dependent cleavage of peptide bonds with broad specificity.. With respect to regulation, allosterically activated by HslU binding. Protease subunit of a proteasome-like degradation complex believed to be a general protein degrading machinery. The chain is ATP-dependent protease subunit HslV from Desulforudis audaxviator (strain MP104C).